The sequence spans 250 residues: Envelope glycoprotein L (250 aa).

Residues 1 to 18 (MELLLFVMSLILLTFSKA) form the signal peptide. A gL betaherpesvirus-type domain is found at 31–239 (KLDDCIAAVI…ETYNSKLPFR (209 aa)). A disulfide bridge links C136 with C141.

This sequence belongs to the herpesviridae glycoprotein L (gL) family. Betaherpesvirinae gL subfamily. In terms of assembly, interacts with glycoprotein H (gH); this interaction is necessary for the correct processing and cell surface expression of gH. Part of a gH-gL-gO complex.

The protein localises to the virion membrane. It localises to the host cell membrane. Its subcellular location is the host Golgi apparatus. The protein resides in the host trans-Golgi network. In terms of biological role, the heterodimer glycoprotein H-glycoprotein L is required for the fusion of viral and plasma membranes leading to virus entry into the host cell. Acts as a functional inhibitor of gH and maintains gH in an inhibited form. Upon binding to host integrins, gL dissociates from gH leading to activation of the viral fusion glycoproteins gB and gH. The chain is Envelope glycoprotein L from Human herpesvirus 6A (strain Uganda-1102) (HHV-6 variant A).